Consider the following 783-residue polypeptide: Zinc finger protein 107 (783 aa).

A C2H2-type 1; atypical zinc finger spans residues phenylalanine 76 to histidine 98. 3 consecutive C2H2-type zinc fingers follow at residues phenylalanine 104–histidine 126, tyrosine 132–histidine 154, and tyrosine 160–histidine 182. A Glycyl lysine isopeptide (Lys-Gly) (interchain with G-Cter in SUMO2) cross-link involves residue lysine 186. The C2H2-type 5 zinc finger occupies asparagine 188–histidine 210. The C2H2-type 6; atypical zinc-finger motif lies at tyrosine 216–histidine 238. The segment at tyrosine 244–histidine 266 adopts a C2H2-type 7 zinc-finger fold. Residues tyrosine 272–histidine 294 form a C2H2-type 8; atypical zinc finger. The segment at asparagine 300 to leucine 322 adopts a C2H2-type 9; atypical zinc-finger fold. C2H2-type zinc fingers lie at residues tyrosine 328 to histidine 350 and tyrosine 356 to histidine 378. A C2H2-type 12; atypical zinc finger spans residues tyrosine 384 to tyrosine 406. 4 consecutive C2H2-type zinc fingers follow at residues tyrosine 412–histidine 434, tyrosine 440–histidine 462, tyrosine 468–histidine 490, and tyrosine 496–histidine 518. The C2H2-type 17; atypical zinc-finger motif lies at asparagine 524 to histidine 546. The C2H2-type 18; atypical zinc-finger motif lies at tyrosine 552–histidine 574. The C2H2-type 19; atypical zinc finger occupies tyrosine 580–tyrosine 602. 5 C2H2-type zinc fingers span residues histidine 608–histidine 630, tyrosine 636–histidine 658, tyrosine 664–histidine 686, tyrosine 692–histidine 714, and tyrosine 720–histidine 742. The C2H2-type 25; atypical zinc-finger motif lies at tyrosine 748–histidine 770.

This sequence belongs to the krueppel C2H2-type zinc-finger protein family. As to expression, expressed in brain, heart, skeletal muscle, kidney and pancreas. Weakly expressed in aorta, liver and lung.

It localises to the nucleus. In terms of biological role, may be involved in transcriptional regulation. The protein is Zinc finger protein 107 (ZNF107) of Homo sapiens (Human).